A 375-amino-acid polypeptide reads, in one-letter code: MIKKIPYKLLAVSTLLTITTANVVSPVATFASEIEQTNNGDTALSANEAKMKETLQKAGLFAKSMNAYSYMLIKNPDVNFEGITINGYVDLPGRIVQDQKNARAHAVTWDTKVKKQLLDTLTGIVEYDTTFDNYYETMVEAINTGDGETLKEGITDLRGEIQQNQKYAQQLIEELTKLRDSIGHDVRAFGSNKELLQSILKNQGADVDADQKRLEEVLGSVNYYKQLESDGFNVMKGAILGLPIIGGIIVGVARDNLGKLEPLLAELRQTVDYKVTLNRVVGVAYSNINEIDKALDDAINALTYMSTQWHDLDSQYSGVLGHIENAAQKADQNKFKFLKPNLNAAKDSWKTLRTDAVTLKEGIKELKVETVTPQK.

Residues 1-31 form the signal peptide; the sequence is MIKKIPYKLLAVSTLLTITTANVVSPVATFA. The helical transmembrane segment at 232 to 252 threads the bilayer; it reads FNVMKGAILGLPIIGGIIVGV.

Composed of a binding component, B, and two lytic components, L1 and L2. All three subunits act synergically to cause hemolysis.

Its subcellular location is the secreted. It is found in the host cell membrane. Functionally, cytotoxic protein, part of the enterotoxin complex. Responsible for binding to erythrocytes. This enterotoxin is thought to be the cause of the diarrheal form of gastroenteritis caused by food-borne strains of B.cereus. The polypeptide is Hemolysin BL-binding component (hblA) (Bacillus cereus).